Consider the following 1017-residue polypeptide: Centriole and centriolar satellite protein OFD1 (1017 aa).

Residues 69-101 (LIGASNSLVADHLQRCGYEYSLSVFFPESGLAK) form the LisH domain. Coiled coils occupy residues 188-557 (PHRS…ENEV) and 626-659 (EFIASSTKAKVRELEQEAERLEKAFRTYYQRATQ). The tract at residues 609–666 (PPYVNTATEASSPESDFEFIASSTKAKVRELEQEAERLEKAFRTYYQRATQNPSTSPQ) is mediates homooligomerization. 4 disordered regions span residues 657-676 (ATQNPSTSPQPAKSPPSVNS), 685-705 (SSSMDRPVSAEDRVVSEQPLG), 721-749 (GSVVSRPRRTSSSTRLSSTPHPKSRRSLD), and 769-801 (LDRVSASPAASPSPCPERTAQASPVPSRHSFSG). Phosphoserine is present on residues S664, S670, S687, S722, S737, S747, S791, and S823. Residues 722–740 (SVVSRPRRTSSSTRLSSTP) are compositionally biased toward low complexity. The stretch at 895-966 (ELHMKERRQR…AHCENTLEKY (72 aa)) forms a coiled coil. Residues 897–988 (HMKERRQREE…ADKSSKKSGK (92 aa)) show a composition bias toward basic and acidic residues. The interval 897-1017 (HMKERRQREE…FSHEEPDDMW (121 aa)) is disordered.

Belongs to the OFD1 family. In terms of assembly, homooligomer. Interacts with LCA5. Interacts with RUVBL1; the interaction is direct and may mediate interaction with the NuA4 histone acetyltransferase complex. Interacts with SDCCAG8; the interaction is direct. Interacts with MAP1LC3B. Interacts with C2CD3; OFD1 may act as a negative regulator of C2CD3. Forms a complex with KIAA0753/OFIP and CEP20/FOR20; the interaction with CEP20 is detected only in the presence of KIAA0753. Interacts with PCM1; this interaction may be mediated by KIAA0753/OFIP. Interacts with TBC1D31; regulates OFD1 activity in cilium assembly. Post-translationally, phosphorylated. Phosphorylation at Ser-737, by the cAMP-dependent protein kinase PKA, triggers ubiquitination and proteasomal degradation of OFD1. Also increases its interaction with TBC1D31 and regulates its function in ciliogenesis. In terms of processing, ubiquitinated by PJA2, upon phosphorylation at Ser-737 by PKA, leads to the proteasomal degradation of OFD1.

It localises to the cytoplasm. The protein resides in the cytoskeleton. It is found in the microtubule organizing center. Its subcellular location is the centrosome. The protein localises to the centriole. It localises to the centriolar satellite. The protein resides in the cilium basal body. It is found in the nucleus. Component of the centrioles controlling mother and daughter centrioles length. Recruits to the centriole IFT88 and centriole distal appendage-specific proteins including CEP164. Involved in the biogenesis of the cilium, a centriole-associated function. The cilium is a cell surface projection found in many vertebrate cells required to transduce signals important for development and tissue homeostasis. Plays an important role in development by regulating Wnt signaling and the specification of the left-right axis. Only OFD1 localized at the centriolar satellites is removed by autophagy, which is an important step in the ciliogenesis regulation. This chain is Centriole and centriolar satellite protein OFD1 (Ofd1), found in Mus musculus (Mouse).